The primary structure comprises 113 residues: Protein AaeX (113 aa).

Helical transmembrane passes span 3–23 and 43–63; these read LLPV…EMIL and FVWH…YLIS.

It belongs to the AaeX family.

It is found in the cell membrane. The polypeptide is Protein AaeX (Sodalis glossinidius (strain morsitans)).